Consider the following 404-residue polypeptide: MMTYEYILVRYGEMTTKGKNRSKFVSTLKDNVKFKLKKFPNIKIDATHDRMYIQLNGEDHEAVSERLKDVFGIHKFNLAMKVPSELEDIKKGALAAFLQVKGDVKTFKITVHRSYKHFPMRTMELLPEIGGHILENTEDITVDVHNPDVNVRVEIRSGYSYIMCDERMGAGGLPVGVGGKVMVLLSGGIDSPVAAYLTMKRGVSVEAVHFHSPPFTSERAKQKVIDLAQELTKYCKRVTLHLVPFTEVQKTINKEIPSSYSMTVMRRMMMRITERIAEERNALAITTGESLGQVASQTLDSMHTINEVTNYPIIRPLITMDKLEIIKIAEEIGTYDISIRPYEDCCTVFTPASPATKPKREKANRFEAKYDFTPLIDEAVANKETMVLQTVEVVAEEEKFEELF.

Positions 61 to 166 (EAVSERLKDV…SGYSYIMCDE (106 aa)) constitute a THUMP domain. Residues 184–185 (LL), 209–210 (HF), R266, G288, and Q297 each bind ATP.

This sequence belongs to the ThiI family.

It is found in the cytoplasm. The catalysed reaction is [ThiI sulfur-carrier protein]-S-sulfanyl-L-cysteine + a uridine in tRNA + 2 reduced [2Fe-2S]-[ferredoxin] + ATP + H(+) = [ThiI sulfur-carrier protein]-L-cysteine + a 4-thiouridine in tRNA + 2 oxidized [2Fe-2S]-[ferredoxin] + AMP + diphosphate. The enzyme catalyses [ThiS sulfur-carrier protein]-C-terminal Gly-Gly-AMP + S-sulfanyl-L-cysteinyl-[cysteine desulfurase] + AH2 = [ThiS sulfur-carrier protein]-C-terminal-Gly-aminoethanethioate + L-cysteinyl-[cysteine desulfurase] + A + AMP + 2 H(+). It participates in cofactor biosynthesis; thiamine diphosphate biosynthesis. Functionally, catalyzes the ATP-dependent transfer of a sulfur to tRNA to produce 4-thiouridine in position 8 of tRNAs, which functions as a near-UV photosensor. Also catalyzes the transfer of sulfur to the sulfur carrier protein ThiS, forming ThiS-thiocarboxylate. This is a step in the synthesis of thiazole, in the thiamine biosynthesis pathway. The sulfur is donated as persulfide by IscS. The sequence is that of Probable tRNA sulfurtransferase from Bacillus cereus (strain AH187).